The primary structure comprises 1069 residues: MLVRRLFQPSTLHWAWRTTALNHPLGRHQGGLRWTHSGGRSYRAVIFDTGGVLVPSPGTVAVGWEVQNHVPSGTIVKAFIRGGDSGPWIRFIKGEITTEHFLEEFGRLCSEIAKTSVPVSSYFSLLTSEQVTKQFPVMTQAISQIRAKGLQTAVLTNNFHLSSGESFLPLDRKQFDVVVESCLEGICKPDPRIFQLCLQRLSLQPSEAIFLDDLGSNLKVAASLGIHTIKVDRPETAVKELEALLGFPLHLGVPNTRPVRKTMAIPQDALEKYLKGLLGTHSTGPMELLQFDHGQSNPTYYIRLADRQLVLRKKPSGTLLPSAHAIEREFRIMKALANAGVPVPTVLDLCEDSSIIGTPFYLMEYCPGIIYKDPSLPGLEPSRREAIYTAMNQVLCRIHSVDLQATSLDSFGKQGDYIPRQVQTWTKQYRAAETSSIPAMERLIQWLPLHLPRQQRTTLVHGDFRLDNLIFHPEKAEVLAVLDWELSTLGDPFADVAYSCLAYYLPSSFPILRGFRDQDVTKLGIPTVEEYFRMYCLNMGIPPIDNWNFYMAFSFFRVAAILQGVYKRSLTGQASSATAQQSGKLTESMAELAWDFATKEGFRVFKEMPATKTLSRSYHAWAGPRSPRTPKGVRGHSTVAAASPSHEAKGGLVISPEGLSPAVRKLYEQLVQFIEQKVYPLEPELQRHQASADRWSPSPLIEDLKEKAKAEGLWNLFLPLETDPEKKYGAGLTNVEYAHLCEVMGMSLYASEIFNCSAPDTGNMEILVRYGTEEQKARWLVPLLEGRIRSCFAMTEPQVASSDASNIEASIKEEDGCYVINGHKWWTSGILDPRCKLCVFMGKTDPQAPRHQQQSMLLVPMDSPGITVIRPLSVFGLEDPPGGHGEVRFKDVRVPKENILLGPGRGFEIAQGRLGPGRIHHCMRLIGYSERALALMKTRVMSRTAFGKPLVEQGTILADIARSRVEIEQARLLVLKAAHLMDVAGNKTAALDIAMIKMVVPSMAYHVIDRAIQAFGAAGLSSDYPLAQFFGWARALRFADGPDEVHQLTVAKMELKNQSRMQEPAVPRV.

Lys413 carries the N6-succinyllysine modification. Lys427 is modified (N6-acetyllysine; alternate). Residue Lys427 is modified to N6-succinyllysine; alternate. FAD-binding positions include 792–802, Ser828, Arg943, Gln1013, and Glu1044; that span reads FAMTEPQVASS. N6-acetyllysine; alternate is present on Lys1052. An N6-succinyllysine; alternate modification is found at Lys1052.

This sequence belongs to the acyl-CoA dehydrogenase family. FAD is required as a cofactor.

The catalysed reaction is a 2,3-saturated acyl-CoA + A = a 2,3-dehydroacyl-CoA + AH2. Functionally, acyl-CoA dehydrogenase only active with R- and S-2-methyl-C15-CoA. In Mus musculus (Mouse), this protein is Acyl-CoA dehydrogenase family member 10 (Acad10).